A 234-amino-acid chain; its full sequence is Chalcone--flavanone isomerase 2 (234 aa).

Substrate is bound by residues Thr-50, Asn-115, and Ser-192.

Belongs to the chalcone isomerase family.

The catalysed reaction is a chalcone = a flavanone.. It functions in the pathway secondary metabolite biosynthesis; flavonoid biosynthesis. Functionally, catalyzes the intramolecular cyclization of bicyclic chalcones into tricyclic (S)-flavanones. Responsible for the isomerization of 4,2',4',6'-tetrahydroxychalcone (also termed chalcone) into naringenin. This chain is Chalcone--flavanone isomerase 2 (CHI2), found in Vitis vinifera (Grape).